Reading from the N-terminus, the 506-residue chain is Histone deacetylase complex subunit CTI6 (506 aa).

The tract at residues 49 to 71 (EESVKQEDVPMEGGEGEVEEEEG) is disordered. Residues 62-71 (GEGEVEEEEG) are compositionally biased toward acidic residues. The segment at 72–123 (ETRCICGELDTPDDSGFFIQCEQCSSWQHGYCVSITQDNAPDKYWCEQCRPE) adopts a PHD-type zinc-finger fold. The interval 138-425 (IYKPVQEKRR…KPRLPPQRTS (288 aa)) is disordered. Residue threonine 174 is modified to Phosphothreonine. Serine 175 bears the Phosphoserine mark. Phosphothreonine is present on threonine 177. A compositionally biased stretch (acidic residues) spans 179–195 (DNVDDIGDEEDEVEDEA). Phosphoserine is present on residues serine 216 and serine 267. Composition is skewed to basic and acidic residues over residues 231 to 271 (DSDK…HQED) and 312 to 342 (DDMK…EKES). A compositionally biased stretch (basic residues) spans 373 to 393 (ASSRGSKRVSKPARKGNRTRR). Over residues 394-404 (SNTSSDTNQNR) the composition is skewed to polar residues. Positions 405–415 (RSADIGTDKPV) are enriched in basic and acidic residues.

As to quaternary structure, component of the RPD3C(L) complex composed of at least ASH1, CTI6, DEP1, PHO23, RPD3, RXT2, RXT3, SAP30, SDS3, SIN3, UME1 and UME6. Interacts with CYC8.

The protein localises to the nucleus. Functionally, component of the RPD3C(L) histone deacetylase complex (HDAC). Responsible for the deacetylation of lysine residues on the N-terminal part of the core histones (H2A, H2B, H3 and H4). Histone deacetylation gives a tag for epigenetic repression and plays an important role in transcriptional regulation, cell cycle progression and developmental events. CTI6 links the SAGA coactivator to the CYC8-TUP1 corepressor. Involved in transcription regulation of heme-regulated genes and required for GCN5 recruitment, histone H3 acetylation and SPT15/TBP binding to promoters. This chain is Histone deacetylase complex subunit CTI6 (CTI6), found in Saccharomyces cerevisiae (strain ATCC 204508 / S288c) (Baker's yeast).